The chain runs to 248 residues: Ethylene-responsive transcription factor ERF026 (248 aa).

Positions 89 to 145 (VYRGIRCRSGKWVSEIREPKKTTRVWLGTYPTPEMAAAAYDVAALALKGGDTLLNFP) form a DNA-binding region, AP2/ERF. The disordered stretch occupies residues 225–248 (PPWMGSPPSDDSPENSDGESLWSY).

It belongs to the AP2/ERF transcription factor family. ERF subfamily.

Its subcellular location is the nucleus. Probably acts as a transcriptional activator. Binds to the GCC-box pathogenesis-related promoter element. May be involved in the regulation of gene expression by stress factors and by components of stress signal transduction pathways. The polypeptide is Ethylene-responsive transcription factor ERF026 (ERF026) (Arabidopsis thaliana (Mouse-ear cress)).